An 89-amino-acid chain; its full sequence is Small ribosomal subunit protein uS15 (89 aa).

This sequence belongs to the universal ribosomal protein uS15 family. Part of the 30S ribosomal subunit. Forms a bridge to the 50S subunit in the 70S ribosome, contacting the 23S rRNA.

In terms of biological role, one of the primary rRNA binding proteins, it binds directly to 16S rRNA where it helps nucleate assembly of the platform of the 30S subunit by binding and bridging several RNA helices of the 16S rRNA. Its function is as follows. Forms an intersubunit bridge (bridge B4) with the 23S rRNA of the 50S subunit in the ribosome. This is Small ribosomal subunit protein uS15 from Streptococcus mutans serotype c (strain ATCC 700610 / UA159).